The sequence spans 333 residues: D-fructose 1,6-bisphosphatase class 2/sedoheptulose 1,7-bisphosphatase (333 aa).

Positions 33, 57, 85, and 88 each coordinate Mn(2+). Residues 88–90 (EGT), Tyr-119, 164–166 (RAR), and 186–188 (DGD) each bind substrate. Glu-213 is a binding site for Mn(2+).

It belongs to the FBPase class 2 family. As to quaternary structure, homotetramer. The cofactor is Mn(2+).

It carries out the reaction beta-D-fructose 1,6-bisphosphate + H2O = beta-D-fructose 6-phosphate + phosphate. The enzyme catalyses D-sedoheptulose 1,7-bisphosphate + H2O = D-sedoheptulose 7-phosphate + phosphate. The protein operates within carbohydrate biosynthesis; Calvin cycle. Functionally, catalyzes the hydrolysis of fructose 1,6-bisphosphate (Fru 1,6-P2) and sedoheptulose 1,7-bisphosphate (Sed 1,7-P2) to fructose 6-phosphate and sedoheptulose 7-phosphate, respectively. In Prochlorococcus marinus subsp. pastoris (strain CCMP1986 / NIES-2087 / MED4), this protein is D-fructose 1,6-bisphosphatase class 2/sedoheptulose 1,7-bisphosphatase.